The sequence spans 102 residues: Small ribosomal subunit protein uS10 (102 aa).

This sequence belongs to the universal ribosomal protein uS10 family. As to quaternary structure, part of the 30S ribosomal subunit.

Its function is as follows. Involved in the binding of tRNA to the ribosomes. The protein is Small ribosomal subunit protein uS10 of Oenococcus oeni (strain ATCC BAA-331 / PSU-1).